A 98-amino-acid polypeptide reads, in one-letter code: Gene 4 protein (98 aa).

In terms of domain architecture, HNH spans 41–73; it reads RAATDVDHKKPGNDHSRSNLQAICRVCHGKKSA. The interval 75–98 is disordered; the sequence is EGVARRRELKARRKRPEQRHPGRR. Over residues 81-98 the composition is skewed to basic residues; it reads RELKARRKRPEQRHPGRR.

This is Gene 4 protein (4) from Mycobacterium (Mycobacteriophage D29).